Consider the following 192-residue polypeptide: UPF0149 protein KPK_0755 (192 aa).

The protein belongs to the UPF0149 family.

This Klebsiella pneumoniae (strain 342) protein is UPF0149 protein KPK_0755.